A 407-amino-acid chain; its full sequence is Leucine-rich repeat-containing protein 42 (407 aa).

LRR repeat units lie at residues 138 to 159 (VLKSLCLRNRYLLISERLEEIR), 163 to 184 (SLECLDLYGCRLGDNHELFKYI), 191 to 211 (SLVKLFMGANCLSDAGLQRLT), 223 to 243 (NLQLLDLSENHITEKGLRYLT), and 247 to 268 (TLQKLDLSGTKVMMDVSLKGFF). The segment at 360-389 (VQSSPSGETHSTHKSRKRRLSTEEEQSAAP) is disordered.

Belongs to the LRRC42 family.

This chain is Leucine-rich repeat-containing protein 42 (lrrc42), found in Danio rerio (Zebrafish).